The primary structure comprises 242 residues: Triosephosphate isomerase (242 aa).

8 to 10 (NWK) is a binding site for substrate. H98 (electrophile) is an active-site residue. Catalysis depends on E167, which acts as the Proton acceptor. Substrate contacts are provided by residues G173, S205, and 226–227 (GG).

This sequence belongs to the triosephosphate isomerase family. As to quaternary structure, homodimer.

Its subcellular location is the cytoplasm. It carries out the reaction D-glyceraldehyde 3-phosphate = dihydroxyacetone phosphate. It participates in carbohydrate biosynthesis; gluconeogenesis. The protein operates within carbohydrate degradation; glycolysis; D-glyceraldehyde 3-phosphate from glycerone phosphate: step 1/1. In terms of biological role, involved in the gluconeogenesis. Catalyzes stereospecifically the conversion of dihydroxyacetone phosphate (DHAP) to D-glyceraldehyde-3-phosphate (G3P). The polypeptide is Triosephosphate isomerase (Mesomycoplasma hyopneumoniae (strain 7448) (Mycoplasma hyopneumoniae)).